We begin with the raw amino-acid sequence, 153 residues long: MNVGTAHSEVNPNTRVMNSRGIWLSYVLAIGLLHVVLLSIPFVSVPVVWTLTNLIHNLGMYIFLHTVKGTPFETPDQGKARLLTHWEQMDYGVQFTASRKFLTITPIVLYFLTSFYTKYDQVHFILNTVSLMTVLIPKLPQLHGVRIFGINKY.

The important for ceramide level-sensing stretch occupies residues 1-17; the sequence is MNVGTAHSEVNPNTRVM. Residues 1–21 are Cytoplasmic-facing; the sequence is MNVGTAHSEVNPNTRVMNSRG. Helical transmembrane passes span 22-42 and 43-63; these read IWLS…SIPF and VSVP…MYIF. Residues 64–94 are Cytoplasmic-facing; sequence LHTVKGTPFETPDQGKARLLTHWEQMDYGVQ. Residues 95 to 117 form a helical membrane-spanning segment; the sequence is FTASRKFLTITPIVLYFLTSFYT. The Extracellular segment spans residues 118-121; that stretch reads KYDQ. Residues 122 to 142 traverse the membrane as a helical segment; it reads VHFILNTVSLMTVLIPKLPQL. Proline 137 carries the hydroxyproline modification. Topologically, residues 143 to 153 are cytoplasmic; it reads HGVRIFGINKY.

The protein belongs to the ORM family. In terms of assembly, ceramide-sensitive subunit of the serine palmitoyltransferase (SPT) complex, which is also composed of SPTLC1, SPTLC2/3 and SPTSSA/B. When hydroxylated at Pro-137, ubiquitinated via 'Lys-48'-linkage, leading to proteasomal degradation. In endothelial cells, ORMDL3 proteasomal degradation is controlled by the sphingosine 1-phosphate receptor signaling pathway.

The protein resides in the endoplasmic reticulum membrane. Functionally, plays an essential role in the homeostatic regulation of sphingolipid de novo biosynthesis by modulating the activity of the serine palmitoyltransferase (SPT) in response to ceramide levels. When complexed to SPT, the binding of ceramides to its N-terminus stabilizes a conformation that block SPT substrate entry, hence preventing SPT catalytic activity. Through this mechanism, maintains ceramide levels at sufficient concentrations for the production of complex sphingolipids, but which prevents the accumulation of ceramides to levels that trigger apoptosis. The sequence is that of ORM1-like protein 3 (Ormdl3) from Mus musculus (Mouse).